The following is a 172-amino-acid chain: C-phycocyanin beta chain (172 aa).

(2R,3E)-phycocyanobilin is bound by residues Asn35, Asp39, Asn72, Arg77, Cys82, 82–88 (CLRDMEI), 149–151 (TTG), and Cys153. The residue at position 72 (Asn72) is an N4-methylasparagine.

It belongs to the phycobiliprotein family. As to quaternary structure, heterodimer of an alpha and a beta subunit. Dimers further assemble into trimers and the trimers into hexamers. The basic functional unit of phycobiliproteins is a ring-shaped hexamer formed from two back-to-back trimers contacting via the alpha chain subunits. The trimers are composed of alpha/beta subunit heterodimers arranged around a three-fold axis of symmetry. The phycoerythrins also contain a gamma subunit which is located in the center of the hexamer. In terms of processing, contains two covalently linked phycocyanobilin chromophores.

Its subcellular location is the plastid. The protein localises to the chloroplast thylakoid membrane. Light-harvesting photosynthetic tetrapyrrole chromophore-protein from the phycobiliprotein complex (phycobilisome, PBS). Phycocyanin is the major phycobiliprotein in the PBS rod. This chain is C-phycocyanin beta chain (cpcB), found in Galdieria sulphuraria (Red alga).